The following is a 101-amino-acid chain: Small ribosomal subunit protein uS14 (101 aa).

It belongs to the universal ribosomal protein uS14 family. As to quaternary structure, part of the 30S ribosomal subunit. Contacts proteins S3 and S10.

In terms of biological role, binds 16S rRNA, required for the assembly of 30S particles and may also be responsible for determining the conformation of the 16S rRNA at the A site. This is Small ribosomal subunit protein uS14 from Shewanella frigidimarina (strain NCIMB 400).